Here is a 79-residue protein sequence, read N- to C-terminus: Translational regulator CsrA (79 aa).

The protein belongs to the CsrA/RsmA family. As to quaternary structure, homodimer; the beta-strands of each monomer intercalate to form a hydrophobic core, while the alpha-helices form wings that extend away from the core.

Its subcellular location is the cytoplasm. Its function is as follows. A translational regulator that binds mRNA to regulate translation initiation and/or mRNA stability. Usually binds in the 5'-UTR at or near the Shine-Dalgarno sequence preventing ribosome-binding, thus repressing translation. Its main target seems to be the major flagellin gene, while its function is anatagonized by FliW. The polypeptide is Translational regulator CsrA (Shouchella clausii (strain KSM-K16) (Alkalihalobacillus clausii)).